Reading from the N-terminus, the 283-residue chain is Thymidylate synthase (283 aa).

Arg-22 contacts dUMP. Catalysis depends on Cys-160, which acts as the Nucleophile. Residues 180–183 (RSCD), Asn-191, and 221–223 (HIY) each bind dUMP. Asp-183 serves as a coordination point for (6R)-5,10-methylene-5,6,7,8-tetrahydrofolate. Ala-282 is a binding site for (6R)-5,10-methylene-5,6,7,8-tetrahydrofolate.

It belongs to the thymidylate synthase family. Bacterial-type ThyA subfamily. As to quaternary structure, homodimer.

It is found in the cytoplasm. The catalysed reaction is dUMP + (6R)-5,10-methylene-5,6,7,8-tetrahydrofolate = 7,8-dihydrofolate + dTMP. The protein operates within pyrimidine metabolism; dTTP biosynthesis. Catalyzes the reductive methylation of 2'-deoxyuridine-5'-monophosphate (dUMP) to 2'-deoxythymidine-5'-monophosphate (dTMP) while utilizing 5,10-methylenetetrahydrofolate (mTHF) as the methyl donor and reductant in the reaction, yielding dihydrofolate (DHF) as a by-product. This enzymatic reaction provides an intracellular de novo source of dTMP, an essential precursor for DNA biosynthesis. The polypeptide is Thymidylate synthase (Colwellia psychrerythraea (strain 34H / ATCC BAA-681) (Vibrio psychroerythus)).